Consider the following 518-residue polypeptide: DNA nucleotidylexotransferase (518 aa).

The short motif at 11-17 is the Nuclear localization signal element; that stretch reads FGKKRQK. A BRCT domain is found at 27–124; it reads IYEIKFHEFV…KPVDTKGKYQ (98 aa). Positions 153 to 518 are mediates interaction with DNTTIP2; that stretch reads SQYACQRRTT…EYIQPSERNA (366 aa). The segment at 260–264 is involved in DNA binding; it reads VGLKT. A 2'-deoxyribonucleoside 5'-triphosphate contacts are provided by residues 335–340 and 344–347; these read GFRRGK and HDVD. 3 residues coordinate Mg(2+): Asp-345, Asp-347, and Asp-442. Residue 457–458 participates in a 2'-deoxyribonucleoside 5'-triphosphate binding; it reads GW.

Belongs to the DNA polymerase type-X family. Interacts with PRP19 and DNTTIP1. Interacts with TRERF1. Forms a ternary complex with DNTTIP2 and core histone. Released from this complex by PCNA. It depends on Mg(2+) as a cofactor.

The protein resides in the nucleus. It carries out the reaction DNA(n) + a 2'-deoxyribonucleoside 5'-triphosphate = DNA(n+1) + diphosphate. In terms of biological role, template-independent DNA polymerase which catalyzes the random addition of deoxynucleoside 5'-triphosphate to the 3'-end of a DNA initiator. One of the in vivo functions of this enzyme is the addition of nucleotides at the junction (N region) of rearranged Ig heavy chain and T-cell receptor gene segments during the maturation of B- and T-cells. In Monodelphis domestica (Gray short-tailed opossum), this protein is DNA nucleotidylexotransferase (DNTT).